The chain runs to 323 residues: Quinolinate synthase (323 aa).

Positions 38 and 55 each coordinate iminosuccinate. [4Fe-4S] cluster is bound at residue cysteine 100. Iminosuccinate contacts are provided by residues tyrosine 126–asparagine 128 and serine 143. Residue cysteine 186 participates in [4Fe-4S] cluster binding. Iminosuccinate is bound by residues histidine 212–glutamate 214 and threonine 229. [4Fe-4S] cluster is bound at residue cysteine 279.

This sequence belongs to the quinolinate synthase family. Type 2 subfamily. [4Fe-4S] cluster is required as a cofactor.

The protein localises to the cytoplasm. The enzyme catalyses iminosuccinate + dihydroxyacetone phosphate = quinolinate + phosphate + 2 H2O + H(+). It participates in cofactor biosynthesis; NAD(+) biosynthesis; quinolinate from iminoaspartate: step 1/1. Catalyzes the condensation of iminoaspartate with dihydroxyacetone phosphate to form quinolinate. The polypeptide is Quinolinate synthase (Gloeothece citriformis (strain PCC 7424) (Cyanothece sp. (strain PCC 7424))).